The chain runs to 30 residues: uncharacterized protein (30 aa).

This is an uncharacterized protein from Bacillus subtilis (strain 168).